The chain runs to 396 residues: (S)-8-oxocitronellyl enol synthase ISY2 (396 aa).

Residues 38–40 (TGL), 66–67 (RR), 84–85 (DV), 108–109 (TW), Gln146, Tyr182, Ile209, and 216–218 (SMM) each bind NADP(+). The active site involves Tyr182.

This sequence belongs to the short-chain dehydrogenases/reductases (SDR) family.

It catalyses the reaction (S)-8-oxocitronellyl enol + NADP(+) = (6E)-8-oxogeranial + NADPH + H(+). The catalysed reaction is (S)-8-oxocitronellyl enol + NAD(+) = (6E)-8-oxogeranial + NADH + H(+). Iridoid synthase that catalyzes the first step in generation of the iridoid ring scaffold using the linear monoterpene (6E)-8-oxogeranial as substrate. Iridoids comprise a large family of distinctive bicyclic monoterpenes that possess a wide range of pharmacological activities, including anticancer, anti-inflammatory, antifungal and antibacterial activities. Catalyzes the conversion of the linear monoterpene (6E)-8-oxogeranial to (S)-8-oxocitronellyl enol, a precursor of nepetalactones, which are metabolites that are both insect-repellent and have euphoric effect in cats. The sequence is that of (S)-8-oxocitronellyl enol synthase ISY2 from Nepeta racemosa (Catmint).